Consider the following 137-residue polypeptide: ATP synthase epsilon chain, chloroplastic (137 aa).

This sequence belongs to the ATPase epsilon chain family. As to quaternary structure, F-type ATPases have 2 components, CF(1) - the catalytic core - and CF(0) - the membrane proton channel. CF(1) has five subunits: alpha(3), beta(3), gamma(1), delta(1), epsilon(1). CF(0) has three main subunits: a, b and c.

It is found in the plastid. It localises to the chloroplast thylakoid membrane. Functionally, produces ATP from ADP in the presence of a proton gradient across the membrane. The polypeptide is ATP synthase epsilon chain, chloroplastic (Medicago sativa (Alfalfa)).